The primary structure comprises 321 residues: MEYKPVPTVKDAAPFDASQDAQVLRAAMKGFGTDEQEIIDVLVGRSNQQRQTIKAVYEAEFERDLVDDLKDELGGKFEDVIVGLMMPPVEYLCKQLHAAMAGIGTEEATLVEILCTKTNEEMAQIVAVYEERYQRPLAEQMCSETSGFFRRLLTLIVTGVRDGLDTPVDVGQAKEQAAQLYSAGEAKLGTDEEVFNRIMSHASFPQLRLVFEEYKVLSGQTIEQAIKHEMSDELHEAMMAIVECVQSPAAFFANRLYKAMNGAGTDDATLIRIIVSRSEIDLETIKQEFERIYNRTLHSAVVDAETSGDYKRALTALLGSA.

4 Annexin repeats span residues Phe15–Met86, Pro87–Thr158, Gly171–Glu243, and Ser247–Gly319.

This sequence belongs to the annexin family.

The sequence is that of Annexin B10 (AnxB10) from Drosophila melanogaster (Fruit fly).